A 421-amino-acid chain; its full sequence is Ankyrin repeat and SOCS box protein 6 (421 aa).

ANK repeat units lie at residues 67–97, 102–131, 136–166, 170–205, 226–255, and 260–289; these read EGVS…NLNF, TYYT…DVNR, HESS…DVNA, HGKT…DVKA, GGDK…DPSE, and ESLT…AYNC. One can recognise an SOCS box domain in the interval 360–415; sequence ALHFSLRQLESYPPPLKHLCRVAIRLYLQPWPVDVKVKALPLPDRLKWYLLSEHSG.

This sequence belongs to the ankyrin SOCS box (ASB) family. Binds APS. Identified in a complex with ELOB and ELOC. Interacts with CUL5 and RNF7. Interacts with SQSTM1. Post-translationally, ubiquitinated by RNF41; leading to proteasomal degradation.

Its subcellular location is the cytoplasm. The protein operates within protein modification; protein ubiquitination. Its function is as follows. Probable substrate-recognition component of a SCF-like ECS (Elongin-Cullin-SOCS-box protein) E3 ubiquitin-protein ligase complex which mediates the ubiquitination and subsequent proteasomal degradation of target proteins. May play a role in the regulation of cell proliferation and autophagy by promoting the ubiquitination and degradation of SQSTM1. The protein is Ankyrin repeat and SOCS box protein 6 (ASB6) of Homo sapiens (Human).